The following is a 266-amino-acid chain: Apolipoprotein A-I (266 aa).

Positions 1–18 (MKAVVLTLAVLFLTGSQA) are cleaved as a signal peptide. Tandem repeats lie at residues 67-88 (LKLL…EQLG) and 89-110 (PVTQ…QEMN). Residues 67–266 (LKLLDNWDSL…EEASKKLNAQ (200 aa)) form a 10 X approximate tandem repeats region. Methionine 109 carries the post-translational modification Methionine sulfoxide. The 3; half-length repeat unit spans residues 111-121 (KDVEEMKTKVQ). Repeat copies occupy residues 122–143 (PYLD…QKVE), 144–165 (PLGS…EKLS), 166–187 (PLGE…TQLA), 188–209 (PYSE…ESGG), and 210–231 (ASLA…EKAK). A 9; half-length repeat occupies 232-242 (PALEDLRQGLL). Repeat 10 spans residues 243–266 (PVLESFKVSLLSALEEASKKLNAQ).

This sequence belongs to the apolipoprotein A1/A4/E family. In terms of assembly, homodimer. Interacts with APOA1BP and CLU. Component of a sperm activating protein complex (SPAP), consisting of APOA1, an immunoglobulin heavy chain, an immunoglobulin light chain and albumin. Interacts with NDRG1. Interacts with SCGB3A2. Interacts with NAXE and YJEFN3. In terms of processing, glycosylated. Post-translationally, palmitoylated. Phosphorylation sites are present in the extracellular medium. Major protein of plasma HDL, also found in chylomicrons.

It is found in the secreted. Its function is as follows. Participates in the reverse transport of cholesterol from tissues to the liver for excretion by promoting cholesterol efflux from tissues and by acting as a cofactor for the lecithin cholesterol acyltransferase (LCAT). As part of the SPAP complex, activates spermatozoa motility. This Carlito syrichta (Philippine tarsier) protein is Apolipoprotein A-I (APOA1).